The following is a 231-amino-acid chain: ATP-dependent dethiobiotin synthetase BioD (231 aa).

ATP is bound at residue glutamate 12–valine 17. Residue threonine 16 coordinates Mg(2+). Lysine 37 is a catalytic residue. Serine 41 provides a ligand contact to substrate. ATP is bound by residues aspartate 51, glutamate 112 to glycine 115, and proline 202 to leucine 204. Residues aspartate 51 and glutamate 112 each coordinate Mg(2+).

Belongs to the dethiobiotin synthetase family. As to quaternary structure, homodimer. It depends on Mg(2+) as a cofactor.

Its subcellular location is the cytoplasm. The catalysed reaction is (7R,8S)-7,8-diammoniononanoate + CO2 + ATP = (4R,5S)-dethiobiotin + ADP + phosphate + 3 H(+). Its pathway is cofactor biosynthesis; biotin biosynthesis; biotin from 7,8-diaminononanoate: step 1/2. Catalyzes a mechanistically unusual reaction, the ATP-dependent insertion of CO2 between the N7 and N8 nitrogen atoms of 7,8-diaminopelargonic acid (DAPA, also called 7,8-diammoniononanoate) to form a ureido ring. In Bacillus subtilis subsp. natto, this protein is ATP-dependent dethiobiotin synthetase BioD.